The following is a 700-amino-acid chain: Elongation factor G (700 aa).

One can recognise a tr-type G domain in the interval 8 to 290 (ERYRNIGISA…AVVEYLPAPT (283 aa)). GTP contacts are provided by residues 17 to 24 (AHIDAGKT), 88 to 92 (DTPGH), and 142 to 145 (NKMD).

The protein belongs to the TRAFAC class translation factor GTPase superfamily. Classic translation factor GTPase family. EF-G/EF-2 subfamily.

It is found in the cytoplasm. Its function is as follows. Catalyzes the GTP-dependent ribosomal translocation step during translation elongation. During this step, the ribosome changes from the pre-translocational (PRE) to the post-translocational (POST) state as the newly formed A-site-bound peptidyl-tRNA and P-site-bound deacylated tRNA move to the P and E sites, respectively. Catalyzes the coordinated movement of the two tRNA molecules, the mRNA and conformational changes in the ribosome. In Haemophilus influenzae (strain 86-028NP), this protein is Elongation factor G.